The primary structure comprises 625 residues: tRNA uridine 5-carboxymethylaminomethyl modification enzyme MnmG (625 aa).

FAD-binding positions include 13–18 (GGGHAG), Val125, and Ser182. 276–290 (GPRYCPSIEDKITRF) is a binding site for NAD(+). Residue Gln373 coordinates FAD.

Belongs to the MnmG family. In terms of assembly, homodimer. Heterotetramer of two MnmE and two MnmG subunits. Requires FAD as cofactor.

Its subcellular location is the cytoplasm. Functionally, NAD-binding protein involved in the addition of a carboxymethylaminomethyl (cmnm) group at the wobble position (U34) of certain tRNAs, forming tRNA-cmnm(5)s(2)U34. This Lactococcus lactis subsp. cremoris (strain SK11) protein is tRNA uridine 5-carboxymethylaminomethyl modification enzyme MnmG.